The primary structure comprises 165 residues: NADPH-dependent 7-cyano-7-deazaguanine reductase (165 aa).

Catalysis depends on Cys56, which acts as the Thioimide intermediate. The active-site Proton donor is the Asp63. Residues 78-80 (VES) and 97-98 (HE) contribute to the substrate site.

Belongs to the GTP cyclohydrolase I family. QueF type 1 subfamily.

Its subcellular location is the cytoplasm. The catalysed reaction is 7-aminomethyl-7-carbaguanine + 2 NADP(+) = 7-cyano-7-deazaguanine + 2 NADPH + 3 H(+). The protein operates within tRNA modification; tRNA-queuosine biosynthesis. Catalyzes the NADPH-dependent reduction of 7-cyano-7-deazaguanine (preQ0) to 7-aminomethyl-7-deazaguanine (preQ1). The polypeptide is NADPH-dependent 7-cyano-7-deazaguanine reductase (Bacillus thuringiensis subsp. konkukian (strain 97-27)).